We begin with the raw amino-acid sequence, 47 residues long: KDCKRESNTFPGICITKPPCRKACIREKFTDGHCSKILRRCLCTKPC.

4 disulfide bridges follow: C3–C47, C14–C34, C20–C41, and C24–C43. The a 1,2-diacyl-sn-glycero-3-phosphate site is built by K4, H33, K36, and R39.

It belongs to the DEFL family. As to quaternary structure, in the presence of phosphatidic acid (PA), forms right-handed double helices which tend to bundle into fibrils. Each helix is a repetition of dimers containing 2 bound molecules of PA per dimer. Dimers are arranged orthogonally in a tip-to-tip configuration with 1 molecule of PA located at the dimer contact interface. Association of 2 helices to form a double helix depends on intercalating isoleucine residues Ile-15 and Ile-37. Bundling of double helices into fibrils depends on Arg-26.

It localises to the vacuole. Plant defense peptide. Disrupts membranes containing phosphatidic acid (PA) via a PA-dependent oligomerization process. This chain is Defensin NsD7, found in Nicotiana suaveolens (Australian tobacco).